A 2383-amino-acid chain; its full sequence is Highly reducing polyketide synthase SAT13 (2383 aa).

In terms of domain architecture, Ketosynthase family 3 (KS3) spans 6-433 (PVPLAIVGIA…GTNAHAVLER (428 aa)). Active-site for beta-ketoacyl synthase activity residues include C180, H315, and H355. A malonyl-CoA:ACP transacylase (MAT) domain region spans residues 536–828 (FIFTGQGAQW…IGPHSALAGP (293 aa)). The For malonyltransferase activity role is filled by S626. The interval 922-1062 (HDLLGLRMTE…GNIVVVFKTS (141 aa)) is N-terminal hotdog fold. The segment at 922 to 1239 (HDLLGLRMTE…GMELRSFVAR (318 aa)) is dehydratase (DH) domain. Residues 922 to 1242 (HDLLGLRMTE…LRSFVARDSN (321 aa)) enclose the PKS/mFAS DH domain. The active-site Proton acceptor; for dehydratase activity is the H954. The C-terminal hotdog fold stretch occupies residues 1087–1242 (GKLTHAGQLY…LRSFVARDSN (156 aa)). D1152 functions as the Proton donor; for dehydratase activity in the catalytic mechanism. An enoylreductase (ER) domain region spans residues 1669–1977 (DGQNRLVFVE…KQGSMKKCVL (309 aa)). The interval 2001 to 2184 (ATYVVAGGLG…MSLNIGGIKD (184 aa)) is catalytic ketoreductase (KRc) domain. The Carrier domain occupies 2287 to 2364 (EISEFVARSI…DLAQKVVSRS (78 aa)). O-(pantetheine 4'-phosphoryl)serine is present on S2324.

Its pathway is mycotoxin biosynthesis. In terms of biological role, highly reducing polyketide synthase; part of the satratoxin SC2 cluster involved in the biosynthesis of satratoxins, trichothecene mycotoxins that are associated with human food poisonings. Satratoxins are suggested to be made by products of multiple gene clusters (SC1, SC2 and SC3) that encode 21 proteins in all, including polyketide synthases, acetyltransferases, and other enzymes expected to modify the trichothecene skeleton. SC1 encodes 10 proteins, SAT1 to SAT10. The largest are SAT8, which encodes a putative polyketide synthase (PKS) with a conventional non-reducing architecture, and SAT10, a putative protein containing four ankyrin repeats and thus may be involved in protein scaffolding. The putative short-chain reductase SAT3 may assist the PKS in some capacity. SAT6 contains a secretory lipase domain and acts probably as a trichothecene esterase. SAT5 encodes a putative acetyltransferase, and so, with SAT6, may affect endogenous protection from toxicity. The probable transcription factor SAT9 may regulate the expression of the SC1 cluster. SC2 encodes proteins SAT11 to SAT16, the largest of which encodes the putative reducing PKS SAT13. SAT11 is a cytochrome P450 monooxygenase, while SAT14 and SAT16 are probable acetyltransferases. The SC2 cluster may be regulated by the transcription factor SAT15. SC3 is a small cluster that encodes 5 proteins, SAT17 to SAT21. SAT21 is a putative MFS-type transporter which may have a role in exporting secondary metabolites. The four other proteins putatively encoded in SC3 include the taurine hydroxylase-like protein SAT17, the O-methyltransferase SAT18, the acetyltransferase SAT19, and the Cys6-type zinc finger SAT20, the latter being probably involved in regulation of SC3 expression. This is Highly reducing polyketide synthase SAT13 from Stachybotrys chartarum (strain CBS 109288 / IBT 7711) (Toxic black mold).